The chain runs to 288 residues: Energy-coupling factor transporter ATP-binding protein EcfA2 (288 aa).

In terms of domain architecture, ABC transporter spans 3-245; that stretch reads IIVKNLTHIY…NASKLKDIGL (243 aa). Residue 40 to 47 participates in ATP binding; that stretch reads GHTGSGKS.

It belongs to the ABC transporter superfamily. Energy-coupling factor EcfA family. In terms of assembly, forms a stable energy-coupling factor (ECF) transporter complex composed of 2 membrane-embedded substrate-binding proteins (S component), 2 ATP-binding proteins (A component) and 2 transmembrane proteins (T component).

It is found in the cell membrane. Its function is as follows. ATP-binding (A) component of a common energy-coupling factor (ECF) ABC-transporter complex. Unlike classic ABC transporters this ECF transporter provides the energy necessary to transport a number of different substrates. The polypeptide is Energy-coupling factor transporter ATP-binding protein EcfA2 (Clostridioides difficile (strain 630) (Peptoclostridium difficile)).